Reading from the N-terminus, the 287-residue chain is Undecaprenyl-diphosphatase (287 aa).

Transmembrane regions (helical) follow at residues 6–26, 45–65, 85–105, 111–131, 204–224, 238–258, and 265–285; these read LYLIKAFFLGIIEGLTEFIPV, SGKVFEVVIQFGSILAVMWIF, AFTRNLLLAFLPAAVVGAIFI, VFYHPGVVAVTLVLGGLIMLW, ATEFSFFLAMPTMLGAATYDL, AIAVGFAAAFISALVVVRAVL, and TYRGFAWYRIALGIVVAAWLM.

This sequence belongs to the UppP family.

The protein localises to the cell inner membrane. The enzyme catalyses di-trans,octa-cis-undecaprenyl diphosphate + H2O = di-trans,octa-cis-undecaprenyl phosphate + phosphate + H(+). In terms of biological role, catalyzes the dephosphorylation of undecaprenyl diphosphate (UPP). Confers resistance to bacitracin. This is Undecaprenyl-diphosphatase from Bordetella petrii (strain ATCC BAA-461 / DSM 12804 / CCUG 43448).